A 383-amino-acid chain; its full sequence is MIVSFGDATTRTSEVQLVRCTQGLNLWKLHQVHAVYKRVVHDTLGADEGNALLDQILADTNLYPPWMCVLLYAFCSAMVTPYAFGGDWVNLAISFFMGLCVGSLQFILSQKSYMYSNVFEISASIVVSFCGRAFGSIPRSHICFGAVTQGSLALILPGYIILCGALELQSRSLVAGAVRMFYAIIYSLFLGFGITLGSALFGWMYHNATNEISCPQLISPWFRFLFVPAFTISISLLNQAHISQLPVMVFISCTGYVVTYWAGKHFANSTEFTAALAAFVIGVLGNLYSRIWKGLAVSAMLPAIFVQVPSGIASQNSLLSGLQSANTIVNANETITTSTSDPSSSMSFGMTMIQVCVGISVGLFASSLFVYPFGKKKTGLFSL.

The Cytoplasmic segment spans residues 1 to 65 (MIVSFGDATT…ILADTNLYPP (65 aa)). A helical membrane pass occupies residues 66-86 (WMCVLLYAFCSAMVTPYAFGG). A topological domain (extracellular) is located at residue Asp-87. A helical membrane pass occupies residues 88–108 (WVNLAISFFMGLCVGSLQFIL). Residues 109-117 (SQKSYMYSN) lie on the Cytoplasmic side of the membrane. A helical transmembrane segment spans residues 118-138 (VFEISASIVVSFCGRAFGSIP). At 139-141 (RSH) the chain is on the extracellular side. A helical membrane pass occupies residues 142-162 (ICFGAVTQGSLALILPGYIIL). The Cytoplasmic segment spans residues 163–180 (CGALELQSRSLVAGAVRM). The helical transmembrane segment at 181 to 201 (FYAIIYSLFLGFGITLGSALF) threads the bilayer. Residues 202 to 216 (GWMYHNATNEISCPQ) are Extracellular-facing. The helical transmembrane segment at 217 to 237 (LISPWFRFLFVPAFTISISLL) threads the bilayer. The Cytoplasmic segment spans residues 238-241 (NQAH). Residues 242–262 (ISQLPVMVFISCTGYVVTYWA) form a helical membrane-spanning segment. The Extracellular portion of the chain corresponds to 263–271 (GKHFANSTE). A helical membrane pass occupies residues 272–292 (FTAALAAFVIGVLGNLYSRIW). Lys-293 is a topological domain (cytoplasmic). Residues 294–314 (GLAVSAMLPAIFVQVPSGIAS) form a helical membrane-spanning segment. Residues 315–352 (QNSLLSGLQSANTIVNANETITTSTSDPSSSMSFGMTM) are Extracellular-facing. A helical transmembrane segment spans residues 353–373 (IQVCVGISVGLFASSLFVYPF). Topologically, residues 374–383 (GKKKTGLFSL) are cytoplasmic.

It belongs to the ThrE exporter (TC 2.A.79) family.

Its subcellular location is the membrane. This Saccharomyces cerevisiae (strain ATCC 204508 / S288c) (Baker's yeast) protein is Pheromone-regulated membrane protein 10 (PRM10).